The chain runs to 255 residues: tRNA (guanine-N(1)-)-methyltransferase (255 aa).

Residues glycine 113 and 133-138 (IGDYVL) each bind S-adenosyl-L-methionine.

Belongs to the RNA methyltransferase TrmD family. Homodimer.

Its subcellular location is the cytoplasm. The enzyme catalyses guanosine(37) in tRNA + S-adenosyl-L-methionine = N(1)-methylguanosine(37) in tRNA + S-adenosyl-L-homocysteine + H(+). Its function is as follows. Specifically methylates guanosine-37 in various tRNAs. The protein is tRNA (guanine-N(1)-)-methyltransferase of Salmonella schwarzengrund (strain CVM19633).